A 513-amino-acid chain; its full sequence is Microtubule-associated protein 70-5 (513 aa).

Disordered regions lie at residues 1 to 20 (MTAA…SQLK), 60 to 81 (KLGA…LEEE), 347 to 367 (FLTS…GSVT), and 393 to 413 (ANGL…EDGN). A compositionally biased stretch (polar residues) spans 9-18 (VSDTSSLQSQ). The stretch at 10 to 322 (SDTSSLQSQL…LKLRLKTIED (313 aa)) forms a coiled coil. Over residues 60–80 (KLGATENQVDQKELERKKLEE) the composition is skewed to basic and acidic residues. The required for targeting to microtubules stretch occupies residues 190-400 (FLEKINRQKV…ITANGLTDQH (211 aa)). Residues 426–501 (DRLQKEVIAL…EESKLCRKAK (76 aa)) are a coiled coil.

The protein belongs to the MAP70 family. As to quaternary structure, interacts with MAP70.1 and itself.

It localises to the cytoplasm. Its subcellular location is the cytoskeleton. Functionally, plant-specific protein that interact with microtubules and regulates microtubule dynamics. May play a role in anisotropic cell expansion and organ growth. In association with MAP70.1, is essential for the normal banding pattern of secondary cell wall and for the proper development of xylem tracheary elements and wood formation. This is Microtubule-associated protein 70-5 (MAP70.5) from Arabidopsis thaliana (Mouse-ear cress).